Reading from the N-terminus, the 1402-residue chain is DNA-directed RNA polymerase subunit beta' (1402 aa).

Cysteine 73, cysteine 75, cysteine 88, and cysteine 91 together coordinate Zn(2+). Aspartate 464, aspartate 466, and aspartate 468 together coordinate Mg(2+). Zn(2+) is bound by residues cysteine 812, cysteine 886, cysteine 893, and cysteine 896.

Belongs to the RNA polymerase beta' chain family. In terms of assembly, the RNAP catalytic core consists of 2 alpha, 1 beta, 1 beta' and 1 omega subunit. When a sigma factor is associated with the core the holoenzyme is formed, which can initiate transcription. It depends on Mg(2+) as a cofactor. Zn(2+) serves as cofactor.

It catalyses the reaction RNA(n) + a ribonucleoside 5'-triphosphate = RNA(n+1) + diphosphate. Its function is as follows. DNA-dependent RNA polymerase catalyzes the transcription of DNA into RNA using the four ribonucleoside triphosphates as substrates. This chain is DNA-directed RNA polymerase subunit beta', found in Rhodopseudomonas palustris (strain ATCC BAA-98 / CGA009).